The sequence spans 156 residues: Arginine repressor (156 aa).

It belongs to the ArgR family.

The protein localises to the cytoplasm. It functions in the pathway amino-acid biosynthesis; L-arginine biosynthesis [regulation]. Functionally, regulates arginine biosynthesis genes. This Shewanella pealeana (strain ATCC 700345 / ANG-SQ1) protein is Arginine repressor.